Here is a 274-residue protein sequence, read N- to C-terminus: Proteasome subunit beta type-5-A (274 aa).

Residues 1 to 57 constitute a propeptide, removed in mature form; sequence MKLDTSGFETSMPMIGFGSSSDMLDELSSVPSFDLPRTKEFDGFQKKAKDMLKHAKG. Thr58 serves as the catalytic Nucleophile.

It belongs to the peptidase T1B family. In terms of assembly, component of the 20S core complex of the 26S proteasome. The 26S proteasome is composed of a core protease (CP), known as the 20S proteasome, capped at one or both ends by the 19S regulatory particle (RP/PA700). The 20S proteasome core is composed of 28 subunits that are arranged in four stacked rings, resulting in a barrel-shaped structure. The two end rings are each formed by seven alpha subunits, and the two central rings are each formed by seven beta subunits. The catalytic chamber with the active sites is on the inside of the barrel. Ubiquitous low levels, higher expression in siliques and flowers.

The protein resides in the cytoplasm. It localises to the nucleus. The catalysed reaction is Cleavage of peptide bonds with very broad specificity.. The proteasome is a multicatalytic proteinase complex which is characterized by its ability to cleave peptides with Arg, Phe, Tyr, Leu, and Glu adjacent to the leaving group at neutral or slightly basic pH. The proteasome has an ATP-dependent proteolytic activity. The chain is Proteasome subunit beta type-5-A (PBE1) from Arabidopsis thaliana (Mouse-ear cress).